Consider the following 100-residue polypeptide: Large ribosomal subunit protein uL23 (100 aa).

It belongs to the universal ribosomal protein uL23 family. Part of the 50S ribosomal subunit. Contacts protein L29, and trigger factor when it is bound to the ribosome.

Its function is as follows. One of the early assembly proteins it binds 23S rRNA. One of the proteins that surrounds the polypeptide exit tunnel on the outside of the ribosome. Forms the main docking site for trigger factor binding to the ribosome. This is Large ribosomal subunit protein uL23 from Prochlorococcus marinus (strain MIT 9515).